The chain runs to 140 residues: Large ribosomal subunit protein bL17 (140 aa).

This sequence belongs to the bacterial ribosomal protein bL17 family. Part of the 50S ribosomal subunit. Contacts protein L32.

The protein is Large ribosomal subunit protein bL17 of Rhizobium johnstonii (strain DSM 114642 / LMG 32736 / 3841) (Rhizobium leguminosarum bv. viciae).